A 160-amino-acid chain; its full sequence is Dysbindin domain-containing protein 1 (160 aa).

Disordered regions lie at residues 1 to 34 (MESPEGAGPGEITKEVKVPQAAPSVPAHETGDTC) and 95 to 160 (ADSD…PKED). Residues S3, S97, and S121 each carry the phosphoserine modification. A compositionally biased stretch (basic and acidic residues) spans 127–143 (TRAEQNREKQTPSDPER).

Belongs to the dysbindin family.

The protein is Dysbindin domain-containing protein 1 (Dbndd1) of Rattus norvegicus (Rat).